A 148-amino-acid polypeptide reads, in one-letter code: Putative HTH-type transcriptional regulator NMA1593 (148 aa).

Positions 2–131 constitute an HTH rrf2-type domain; the sequence is RLTTKGRFAV…GSVTLQSIIE (130 aa).

The chain is Putative HTH-type transcriptional regulator NMA1593 from Neisseria meningitidis serogroup A / serotype 4A (strain DSM 15465 / Z2491).